The chain runs to 543 residues: Probable zinc transporter protein DDB_G0283629 (543 aa).

Positions methionine 1–arginine 175 are disordered. At methionine 1–serine 186 the chain is on the cytoplasmic side. Composition is skewed to low complexity over residues serine 11–asparagine 26 and asparagine 41–isoleucine 55. Composition is skewed to basic and acidic residues over residues asparagine 56 to histidine 66 and histidine 76 to valine 104. Residues glycine 105 to glutamine 116 are compositionally biased toward low complexity. Positions glutamate 130 to glycine 140 are enriched in gly residues. Residues leucine 187–phenylalanine 207 form a helical membrane-spanning segment. Over alanine 208 to aspartate 216 the chain is Extracellular. Residues alanine 217–serine 237 form a helical membrane-spanning segment. Residues glutamine 238–arginine 251 lie on the Cytoplasmic side of the membrane. A helical transmembrane segment spans residues alanine 252–valine 272. Residues tyrosine 273–lysine 289 are Extracellular-facing. Residues isoleucine 290–histidine 310 traverse the membrane as a helical segment. The Cytoplasmic segment spans residues tryptophan 311–tyrosine 375. The disordered stretch occupies residues serine 319 to asparagine 342. The chain crosses the membrane as a helical span at residues isoleucine 376–tryptophan 396. Residues valine 397 to lysine 402 lie on the Extracellular side of the membrane. The helical transmembrane segment at isoleucine 403–leucine 423 threads the bilayer. At leucine 424 to glutamine 543 the chain is on the cytoplasmic side. The disordered stretch occupies residues lysine 516–glutamine 543.

The protein belongs to the cation diffusion facilitator (CDF) transporter (TC 2.A.4) family. SLC30A subfamily.

The protein localises to the membrane. May be involved in zinc transport from the cytoplasm to either intracellular organelles or extracellular spaces. The protein is Probable zinc transporter protein DDB_G0283629 of Dictyostelium discoideum (Social amoeba).